The chain runs to 202 residues: LexA repressor (202 aa).

The H-T-H motif DNA-binding region spans 28–48 (RAEIAQRLGFRSPNAAEEHLK). Residues serine 119 and lysine 156 each act as for autocatalytic cleavage activity in the active site.

The protein belongs to the peptidase S24 family. In terms of assembly, homodimer.

The enzyme catalyses Hydrolysis of Ala-|-Gly bond in repressor LexA.. In terms of biological role, represses a number of genes involved in the response to DNA damage (SOS response), including recA and lexA. Binds to the 16 bp palindromic sequence 5'-CTGTATATATATACAG-3'. In the presence of single-stranded DNA, RecA interacts with LexA causing an autocatalytic cleavage which disrupts the DNA-binding part of LexA, leading to derepression of the SOS regulon and eventually DNA repair. The sequence is that of LexA repressor from Yersinia pseudotuberculosis serotype O:1b (strain IP 31758).